We begin with the raw amino-acid sequence, 37 residues long: Esculentin-2JDa (37 aa).

Cys-31 and Cys-37 are disulfide-bonded.

As to expression, expressed by the skin glands.

Its subcellular location is the secreted. Its function is as follows. Has antibacterial activity against E.coli and S.aureus strains. The chain is Esculentin-2JDa from Odorrana jingdongensis (Jingdong frog).